We begin with the raw amino-acid sequence, 349 residues long: Magnesium-protoporphyrin IX monomethyl ester [oxidative] cyclase (349 aa).

Positions 1–10 are enriched in low complexity; sequence MTATTATAPT. Residues 1 to 23 are disordered; the sequence is MTATTATAPTMRGGGRNELPPHL.

It belongs to the AcsF family. Requires Fe cation as cofactor.

The catalysed reaction is Mg-protoporphyrin IX 13-monomethyl ester + 3 NADPH + 3 O2 + 2 H(+) = 3,8-divinyl protochlorophyllide a + 3 NADP(+) + 5 H2O. It participates in porphyrin-containing compound metabolism; chlorophyll biosynthesis (light-independent). Catalyzes the formation of the isocyclic ring in chlorophyll biosynthesis. Mediates the cyclase reaction, which results in the formation of divinylprotochlorophyllide (Pchlide) characteristic of all chlorophylls from magnesium-protoporphyrin IX 13-monomethyl ester (MgPMME). This is Magnesium-protoporphyrin IX monomethyl ester [oxidative] cyclase from Prochlorococcus marinus (strain MIT 9313).